We begin with the raw amino-acid sequence, 716 residues long: Fatty acid oxidation complex subunit alpha (716 aa).

Positions 1-189 are enoyl-CoA hydratase/isomerase; the sequence is MIYQSPTIQV…KVGAVDAVVA (189 aa). Position 296 (Asp296) interacts with substrate. Positions 311 to 716 are 3-hydroxyacyl-CoA dehydrogenase; it reads KEVNNAAVLG…AANNGSYYQA (406 aa). NAD(+) contacts are provided by residues Met324, Asp343, 400 to 402, Lys407, and Ser429; that span reads VVE. The For 3-hydroxyacyl-CoA dehydrogenase activity role is filled by His450. Residue Asn453 participates in NAD(+) binding. Asn500 and Tyr660 together coordinate substrate.

In the N-terminal section; belongs to the enoyl-CoA hydratase/isomerase family. The protein in the C-terminal section; belongs to the 3-hydroxyacyl-CoA dehydrogenase family. As to quaternary structure, heterotetramer of two alpha chains (FadB) and two beta chains (FadA).

The catalysed reaction is a (3S)-3-hydroxyacyl-CoA + NAD(+) = a 3-oxoacyl-CoA + NADH + H(+). The enzyme catalyses a (3S)-3-hydroxyacyl-CoA = a (2E)-enoyl-CoA + H2O. It catalyses the reaction a 4-saturated-(3S)-3-hydroxyacyl-CoA = a (3E)-enoyl-CoA + H2O. It carries out the reaction (3S)-3-hydroxybutanoyl-CoA = (3R)-3-hydroxybutanoyl-CoA. The catalysed reaction is a (3Z)-enoyl-CoA = a 4-saturated (2E)-enoyl-CoA. The enzyme catalyses a (3E)-enoyl-CoA = a 4-saturated (2E)-enoyl-CoA. Its pathway is lipid metabolism; fatty acid beta-oxidation. Functionally, involved in the aerobic and anaerobic degradation of long-chain fatty acids via beta-oxidation cycle. Catalyzes the formation of 3-oxoacyl-CoA from enoyl-CoA via L-3-hydroxyacyl-CoA. It can also use D-3-hydroxyacyl-CoA and cis-3-enoyl-CoA as substrate. The protein is Fatty acid oxidation complex subunit alpha of Shewanella baltica (strain OS195).